Consider the following 230-residue polypeptide: Phosphoribosylformylglycinamidine synthase subunit PurQ (230 aa).

The Glutamine amidotransferase type-1 domain maps to 2 to 230 (KIAVTKFLGT…KGMIDYAKRI (229 aa)). The Nucleophile role is filled by Cys-85. Residues His-202 and Glu-204 contribute to the active site.

In terms of assembly, part of the FGAM synthase complex composed of 1 PurL, 1 PurQ and 2 PurS subunits.

It is found in the cytoplasm. The enzyme catalyses N(2)-formyl-N(1)-(5-phospho-beta-D-ribosyl)glycinamide + L-glutamine + ATP + H2O = 2-formamido-N(1)-(5-O-phospho-beta-D-ribosyl)acetamidine + L-glutamate + ADP + phosphate + H(+). It catalyses the reaction L-glutamine + H2O = L-glutamate + NH4(+). It functions in the pathway purine metabolism; IMP biosynthesis via de novo pathway; 5-amino-1-(5-phospho-D-ribosyl)imidazole from N(2)-formyl-N(1)-(5-phospho-D-ribosyl)glycinamide: step 1/2. In terms of biological role, part of the phosphoribosylformylglycinamidine synthase complex involved in the purines biosynthetic pathway. Catalyzes the ATP-dependent conversion of formylglycinamide ribonucleotide (FGAR) and glutamine to yield formylglycinamidine ribonucleotide (FGAM) and glutamate. The FGAM synthase complex is composed of three subunits. PurQ produces an ammonia molecule by converting glutamine to glutamate. PurL transfers the ammonia molecule to FGAR to form FGAM in an ATP-dependent manner. PurS interacts with PurQ and PurL and is thought to assist in the transfer of the ammonia molecule from PurQ to PurL. The polypeptide is Phosphoribosylformylglycinamidine synthase subunit PurQ (Methanocaldococcus jannaschii (strain ATCC 43067 / DSM 2661 / JAL-1 / JCM 10045 / NBRC 100440) (Methanococcus jannaschii)).